Reading from the N-terminus, the 448-residue chain is MGQAQSGNFSNFGDGANGDNKKDQKKDKPKYEPPVPTRTGRRKKKAQSGPDASAKLPTVIPTTRCRLRLLKMQRIHDHLLMEEEYVQNQERLKPQDERTQEERNRVDEIRGTPMSVGTLEEIIDDDHAIVSTAGPEYYVSIMSFVDKDMLEPGCSVLLHHKAMSIVGLLLDDTDPMINVMKLDKAPTESYADIGGLESQIQEIKEAVELPLTHPELYEEMGIKPPKGVILYGAPGTGKTLLAKAVANQTSATFLRVVGSELIQKYLGDGPRLVRQLFNAAEEHSPSIVFIDEIDAIGTKRYDAQSGAEREIQRTMLELLNQLDGFDTSQRDIKVIMATNRISDLDPALIRPGRIDRKILFENPDEATKRKIFTIHTSKMNLGEDVNLEELIQCKDDLSGAEIKAIVSEAGLLALRERRMRVVMDDFRQAREKVLKTKDEGGPAGGLYI.

Over residues 1–10 the composition is skewed to polar residues; it reads MGQAQSGNFS. The segment at 1 to 58 is disordered; it reads MGQAQSGNFSNFGDGANGDNKKDQKKDKPKYEPPVPTRTGRRKKKAQSGPDASAKLPT. Basic and acidic residues predominate over residues 19–31; the sequence is DNKKDQKKDKPKY. ATP is bound at residue 232-239; that stretch reads GAPGTGKT.

This sequence belongs to the AAA ATPase family.

The protein localises to the cytoplasm. The protein resides in the nucleus. The 26S proteasome is involved in the ATP-dependent degradation of ubiquitinated proteins. The regulatory (or ATPase) complex confers ATP dependency and substrate specificity to the 26S complex. This chain is 26S proteasome regulatory subunit 4 homolog (mts2), found in Schizosaccharomyces pombe (strain 972 / ATCC 24843) (Fission yeast).